The primary structure comprises 91 residues: Small ribosomal subunit protein uS19 (91 aa).

This sequence belongs to the universal ribosomal protein uS19 family.

In terms of biological role, protein S19 forms a complex with S13 that binds strongly to the 16S ribosomal RNA. The polypeptide is Small ribosomal subunit protein uS19 (Bordetella pertussis (strain Tohama I / ATCC BAA-589 / NCTC 13251)).